The primary structure comprises 874 residues: Valine--tRNA ligase (874 aa).

The span at 1–10 (MTENSQQQPP) shows a compositional bias: polar residues. Positions 1 to 23 (MTENSQQQPPASEPELPTQYAPA) are disordered. A 'HIGH' region motif is present at residues 57 to 67 (PNVTGSLHLGH). The 'KMSKS' region signature appears at 531–535 (KMSKS). K534 serves as a coordination point for ATP. Positions 806-871 (IDIVAERKRL…ARIQAQLDRM (66 aa)) form a coiled coil.

This sequence belongs to the class-I aminoacyl-tRNA synthetase family. ValS type 1 subfamily. Monomer.

Its subcellular location is the cytoplasm. The catalysed reaction is tRNA(Val) + L-valine + ATP = L-valyl-tRNA(Val) + AMP + diphosphate. Catalyzes the attachment of valine to tRNA(Val). As ValRS can inadvertently accommodate and process structurally similar amino acids such as threonine, to avoid such errors, it has a 'posttransfer' editing activity that hydrolyzes mischarged Thr-tRNA(Val) in a tRNA-dependent manner. In Streptomyces avermitilis (strain ATCC 31267 / DSM 46492 / JCM 5070 / NBRC 14893 / NCIMB 12804 / NRRL 8165 / MA-4680), this protein is Valine--tRNA ligase.